Here is a 284-residue protein sequence, read N- to C-terminus: Avenin-like b6 (284 aa).

An N-terminal signal peptide occupies residues 1-18 (MKVFILALLALAATTAIA).

This sequence belongs to the prolamin family. Contains disulfide bonds.

Functionally, seed storage protein. Might be integrated via inter-chain disulfide bonds within the glutenin polymer. The protein is Avenin-like b6 of Triticum aestivum (Wheat).